Here is a 733-residue protein sequence, read N- to C-terminus: uncharacterized protein (733 aa).

The chain crosses the membrane as a helical span at residues 174 to 194; it reads WAVMILASLRPELFGPIIIAG.

It is found in the membrane. This is an uncharacterized protein from Rhizobium meliloti (Ensifer meliloti).